A 1048-amino-acid chain; its full sequence is Malignant fibrous histiocytoma-amplified sequence 1 homolog (1048 aa).

Residue A2 is modified to N-acetylalanine. 13 LRR repeats span residues 60 to 81 (DIEV…LGSA), 84 to 105 (SLRV…VAEL), 108 to 129 (HLTE…VVSA), 132 to 153 (ELRK…LGAL), 155 to 176 (HLEE…FSCL), 178 to 199 (HLRT…LLQL), 201 to 222 (ALEE…ISAL), 224 to 246 (ALKI…CELA), 247 to 268 (SLES…FSRL), 270 to 292 (RLKM…LPLA), 293 to 314 (GLEE…IAGL), 316 to 337 (RLLT…IVEL), and 339 to 360 (GLEE…FGQL). Positions 60-360 (DIEVLNLGNN…AVLPDNFGQL (301 aa)) are required for interaction with PJA2. Positions 60–645 (DIEVLNLGNN…DKLLSVAEHR (586 aa)) are required for interaction with PPP2R2A. The 247-residue stretch at 399 to 645 (QPAVQPRLKL…DKLLSVAEHR (247 aa)) folds into the Roc domain. An N6-acetyllysine modification is found at K597.

In terms of assembly, interacts with RAF1. Interacts with HSPD1. Interacts with PPP2CA; retains PPP2CA into the cytoplasm and excludes it from the nucleus. Interacts with PPP2R2A; the interaction is direct. Interacts with PJA2. Ubiquitinated. Ubiquitination by PJA2 does not lead MFHAS1 to proteasomal degradation but positively regulates its function in polarization of macrophages.

The protein resides in the cytoplasm. Its function is as follows. Probable GTP-binding protein. Functions in innate immunity and more specifically the inflammatory response as a regulator of the Toll-like receptor TLR2 and TLR4 signaling pathways. Negatively regulates the part of the TLR4 signaling pathway that leads to the activation of the transcription factor AP-1. By retaining the phosphatase complex PP2A into the cytoplasm, prevents the dephosphorylation of the AP-1 subunit JUN which is required for proper activation of the transcription factor. Both inhibits and activates the TLR2-dependent signaling pathway. Positively regulates the TLR2 signaling pathway to activate specifically the downstream p38 and JNK MAP kinases and promote the polarization of macrophages toward the pro-inflammatory M1 phenotype. It may also play a role in the regulation of inflammation induced by high glucose through the PKB/AKT signaling pathway. Also involved in erythrocyte differentiation through activation of the ERK1/ERK2 signaling pathway. The chain is Malignant fibrous histiocytoma-amplified sequence 1 homolog from Mus musculus (Mouse).